The chain runs to 356 residues: Glutamine synthetase (356 aa).

The GS beta-grasp domain maps to 19-99 (IIAEYIWIGG…VMCDCYTPRG (81 aa)). The region spanning 106-356 (KRYNAAKILS…IAQTTILWKP (251 aa)) is the GS catalytic domain.

The protein belongs to the glutamine synthetase family. As to quaternary structure, homooctamer.

It is found in the cytoplasm. The enzyme catalyses L-glutamate + NH4(+) + ATP = L-glutamine + ADP + phosphate + H(+). The sequence is that of Glutamine synthetase from Hordeum vulgare (Barley).